A 297-amino-acid polypeptide reads, in one-letter code: 2-phospho-L-lactate transferase (297 aa).

D49 serves as a coordination point for 7,8-didemethyl-8-hydroxy-5-deazariboflavin.

This sequence belongs to the CofD family. As to quaternary structure, homodimer. It depends on Mg(2+) as a cofactor.

It carries out the reaction (2S)-lactyl-2-diphospho-5'-guanosine + 7,8-didemethyl-8-hydroxy-5-deazariboflavin = oxidized coenzyme F420-0 + GMP + H(+). The protein operates within cofactor biosynthesis; coenzyme F420 biosynthesis. Catalyzes the transfer of the 2-phospholactate moiety from (2S)-lactyl-2-diphospho-5'-guanosine to 7,8-didemethyl-8-hydroxy-5-deazariboflavin (FO) with the formation of oxidized coenzyme F420-0 and GMP. This Methanospirillum hungatei JF-1 (strain ATCC 27890 / DSM 864 / NBRC 100397 / JF-1) protein is 2-phospho-L-lactate transferase.